Reading from the N-terminus, the 331-residue chain is NADH-quinone oxidoreductase subunit H (331 aa).

8 consecutive transmembrane segments (helical) span residues 13 to 33, 80 to 100, 113 to 133, 159 to 179, 183 to 203, 249 to 269, 273 to 293, and 311 to 331; these read FLIS…VLTL, WVFL…WLVI, IGLV…IMAG, LILS…VDIV, AGGF…AFFV, VMSA…LPFL, VFNW…FQWI, and KILV…MLVI.

The protein belongs to the complex I subunit 1 family. NDH-1 is composed of 14 different subunits. Subunits NuoA, H, J, K, L, M, N constitute the membrane sector of the complex.

The protein resides in the cell membrane. It carries out the reaction a quinone + NADH + 5 H(+)(in) = a quinol + NAD(+) + 4 H(+)(out). In terms of biological role, NDH-1 shuttles electrons from NADH, via FMN and iron-sulfur (Fe-S) centers, to quinones in the respiratory chain. The immediate electron acceptor for the enzyme in this species is believed to be ubiquinone. Couples the redox reaction to proton translocation (for every two electrons transferred, four hydrogen ions are translocated across the cytoplasmic membrane), and thus conserves the redox energy in a proton gradient. This subunit may bind ubiquinone. The protein is NADH-quinone oxidoreductase subunit H of Rubrobacter xylanophilus (strain DSM 9941 / JCM 11954 / NBRC 16129 / PRD-1).